A 164-amino-acid chain; its full sequence is Ribosome maturation factor RimM (164 aa).

One can recognise a PRC barrel domain in the interval 90–161 (KGSYFIADLI…TVTIKPLEIW (72 aa)).

Belongs to the RimM family. In terms of assembly, binds ribosomal protein uS19.

It localises to the cytoplasm. Functionally, an accessory protein needed during the final step in the assembly of 30S ribosomal subunit, possibly for assembly of the head region. Essential for efficient processing of 16S rRNA. May be needed both before and after RbfA during the maturation of 16S rRNA. It has affinity for free ribosomal 30S subunits but not for 70S ribosomes. The polypeptide is Ribosome maturation factor RimM (Clostridium botulinum (strain Langeland / NCTC 10281 / Type F)).